The following is a 668-amino-acid chain: Probable ATP-dependent RNA helicase ddx52 (668 aa).

The interval 37–174 is disordered; that stretch reads KQTKTNNKVH…TQEDKHKREI (138 aa). Over residues 40–57 the composition is skewed to polar residues; sequence KTNNKVHFFKNTTPSTPV. Basic and acidic residues predominate over residues 59–69; that stretch reads SKKDNIKQKKE. Over residues 70-108 the composition is skewed to acidic residues; that stretch reads EEEDNDNDNEESKEDDDFVEDDDNDDDDDDDDEDEENEE. Positions 109-120 are enriched in basic and acidic residues; the sequence is PKEKEFIKHQVN. A compositionally biased stretch (acidic residues) spans 138-147; the sequence is ENSDDSDDSD. The segment covering 161–174 has biased composition (basic and acidic residues); sequence VSKETQEDKHKREI. A Q motif motif is present at residues 199 to 227; the sequence is QLENRFKVRKYLLNNINEIGYKEPSPIQM. The Helicase ATP-binding domain maps to 230–402; it reads IPILLKEREV…HSIMKNPIKI (173 aa). ATP is bound at residue 243–250; that stretch reads APTGSGKT. The short motif at 349-352 is the DEAD box element; sequence DEAD. The region spanning 413–574 is the Helicase C-terminal domain; the sequence is TVDQKLIYVG…HVPDWMLNLK (162 aa). The tract at residues 601–668 is disordered; that stretch reads RTSSKFKLRK…KQIKKPKKII (68 aa). Residues 604 to 613 are compositionally biased toward basic residues; it reads SKFKLRKNKK. The segment covering 624 to 636 has biased composition (low complexity); that stretch reads SNENNNNNNNNNN. Residues 659-668 show a composition bias toward basic residues; that stretch reads KQIKKPKKII.

Belongs to the DEAD box helicase family. DDX52/ROK1 subfamily.

The protein localises to the nucleus. The protein resides in the nucleolus. It carries out the reaction ATP + H2O = ADP + phosphate + H(+). ATP-binding RNA helicase which may be involved in the ribosome biogenesis. The sequence is that of Probable ATP-dependent RNA helicase ddx52 (ddx52) from Dictyostelium discoideum (Social amoeba).